We begin with the raw amino-acid sequence, 431 residues long: Phosphomethylpyrimidine synthase (431 aa).

Residues Asn66, Met95, Tyr124, His163, 185 to 187, 226 to 229, and Glu265 each bind substrate; these read SRG and DGLR. His269 is a binding site for Zn(2+). A substrate-binding site is contributed by Tyr292. His333 is a binding site for Zn(2+). 3 residues coordinate [4Fe-4S] cluster: Cys408, Cys411, and Cys415.

This sequence belongs to the ThiC family. [4Fe-4S] cluster serves as cofactor.

It carries out the reaction 5-amino-1-(5-phospho-beta-D-ribosyl)imidazole + S-adenosyl-L-methionine = 4-amino-2-methyl-5-(phosphooxymethyl)pyrimidine + CO + 5'-deoxyadenosine + formate + L-methionine + 3 H(+). It participates in cofactor biosynthesis; thiamine diphosphate biosynthesis. Functionally, catalyzes the synthesis of the hydroxymethylpyrimidine phosphate (HMP-P) moiety of thiamine from aminoimidazole ribotide (AIR) in a radical S-adenosyl-L-methionine (SAM)-dependent reaction. This chain is Phosphomethylpyrimidine synthase, found in Dehalococcoides mccartyi (strain ATCC BAA-2100 / JCM 16839 / KCTC 5957 / BAV1).